The sequence spans 335 residues: 34 kDa spicule matrix protein (335 aa).

A signal peptide spans 1–17; the sequence is MKGLLLILASLVAIATG. The region spanning 29–194 is the C-type lectin domain; that stretch reads SGASCYRYFN…ATAMRAFVCE (166 aa). An intrachain disulfide couples cysteine 50 to cysteine 193. The segment at 199-335 is disordered; the sequence is QNIPPGQQPG…QEAETDVTGS (137 aa). Gly residues predominate over residues 207 to 310; the sequence is PGFGGQQPGF…GGPQRPGMGG (104 aa). Over residues 311–323 the composition is skewed to low complexity; sequence QPNSPNPRFNRPR.

This sequence belongs to the SM50 family. As to expression, embryo spicule.

It localises to the secreted. Its function is as follows. Major matrix protein of the sea urchin embryo spicule which directs crystal growth in certain orientations and inhibit growth in others. In Lytechinus pictus (Painted sea urchin), this protein is 34 kDa spicule matrix protein.